The following is a 336-amino-acid chain: Aspartate carbamoyltransferase catalytic subunit (336 aa).

Residues Arg71 and Thr72 each contribute to the carbamoyl phosphate site. Lys99 lines the L-aspartate pocket. Carbamoyl phosphate-binding residues include Arg121, His151, and Gln154. 2 residues coordinate L-aspartate: Arg184 and Arg239. Carbamoyl phosphate contacts are provided by Gly280 and Pro281.

This sequence belongs to the aspartate/ornithine carbamoyltransferase superfamily. ATCase family. In terms of assembly, heterododecamer (2C3:3R2) of six catalytic PyrB chains organized as two trimers (C3), and six regulatory PyrI chains organized as three dimers (R2).

The enzyme catalyses carbamoyl phosphate + L-aspartate = N-carbamoyl-L-aspartate + phosphate + H(+). It functions in the pathway pyrimidine metabolism; UMP biosynthesis via de novo pathway; (S)-dihydroorotate from bicarbonate: step 2/3. Functionally, catalyzes the condensation of carbamoyl phosphate and aspartate to form carbamoyl aspartate and inorganic phosphate, the committed step in the de novo pyrimidine nucleotide biosynthesis pathway. This chain is Aspartate carbamoyltransferase catalytic subunit, found in Azotobacter vinelandii (strain DJ / ATCC BAA-1303).